The sequence spans 406 residues: Argininosuccinate synthase (406 aa).

ATP-binding positions include 11 to 19 and Ala-38; that span reads AYSGGLDTS. Residues Tyr-91 and Ser-96 each contribute to the L-citrulline site. An ATP-binding site is contributed by Gly-121. Positions 123, 127, and 128 each coordinate L-aspartate. Asn-127 lines the L-citrulline pocket. Arg-131, Ser-182, Ser-191, Glu-267, and Tyr-279 together coordinate L-citrulline.

It belongs to the argininosuccinate synthase family. Type 1 subfamily. Homotetramer.

It is found in the cytoplasm. The enzyme catalyses L-citrulline + L-aspartate + ATP = 2-(N(omega)-L-arginino)succinate + AMP + diphosphate + H(+). It participates in amino-acid biosynthesis; L-arginine biosynthesis; L-arginine from L-ornithine and carbamoyl phosphate: step 2/3. This chain is Argininosuccinate synthase, found in Rhodospirillum centenum (strain ATCC 51521 / SW).